A 1093-amino-acid chain; its full sequence is Probable phosphorylase b kinase regulatory subunit beta (1093 aa).

The tract at residues 1–27 (MRDVPKSLGLSVTTPGGSSGAPDSGRH) is disordered. Calmodulin-binding regions lie at residues 6-27 (KSLG…SGRH), 751-778 (QLYH…IVDS), and 905-936 (EKLT…ILQR). Residue Cys1090 is the site of S-farnesyl cysteine attachment.

Belongs to the phosphorylase b kinase regulatory chain family. Although the final Cys may be farnesylated, the terminal tripeptide is probably not removed, and the C-terminus is not methylated.

The protein resides in the cell membrane. The protein operates within glycan biosynthesis; glycogen metabolism. In terms of biological role, phosphorylase b kinase catalyzes the phosphorylation of serine in certain substrates, including troponin I. The beta chain acts as a regulatory unit and modulates the activity of the holoenzyme in response to phosphorylation. The protein is Probable phosphorylase b kinase regulatory subunit beta of Drosophila melanogaster (Fruit fly).